The following is a 374-amino-acid chain: Probable dual-specificity RNA methyltransferase RlmN 3 (374 aa).

Catalysis depends on glutamate 96, which acts as the Proton acceptor. A Radical SAM core domain is found at 110-350 (DHSRKTICIS…VTLRREKGHD (241 aa)). An intrachain disulfide couples cysteine 117 to cysteine 355. Positions 124, 128, and 131 each coordinate [4Fe-4S] cluster. S-adenosyl-L-methionine contacts are provided by residues 181–182 (GE), serine 213, 236–238 (SLH), and asparagine 312. The active-site S-methylcysteine intermediate is cysteine 355.

Belongs to the radical SAM superfamily. RlmN family. [4Fe-4S] cluster is required as a cofactor.

It is found in the cytoplasm. The catalysed reaction is adenosine(2503) in 23S rRNA + 2 reduced [2Fe-2S]-[ferredoxin] + 2 S-adenosyl-L-methionine = 2-methyladenosine(2503) in 23S rRNA + 5'-deoxyadenosine + L-methionine + 2 oxidized [2Fe-2S]-[ferredoxin] + S-adenosyl-L-homocysteine. It catalyses the reaction adenosine(37) in tRNA + 2 reduced [2Fe-2S]-[ferredoxin] + 2 S-adenosyl-L-methionine = 2-methyladenosine(37) in tRNA + 5'-deoxyadenosine + L-methionine + 2 oxidized [2Fe-2S]-[ferredoxin] + S-adenosyl-L-homocysteine. Specifically methylates position 2 of adenine 2503 in 23S rRNA and position 2 of adenine 37 in tRNAs. The protein is Probable dual-specificity RNA methyltransferase RlmN 3 of Opitutus terrae (strain DSM 11246 / JCM 15787 / PB90-1).